The primary structure comprises 115 residues: NADH-ubiquinone oxidoreductase chain 3 (115 aa).

The next 3 membrane-spanning stretches (helical) occupy residues L3 to F23, F56 to L76, and P84 to Y104.

It belongs to the complex I subunit 3 family.

The protein resides in the mitochondrion membrane. It catalyses the reaction a ubiquinone + NADH + 5 H(+)(in) = a ubiquinol + NAD(+) + 4 H(+)(out). Core subunit of the mitochondrial membrane respiratory chain NADH dehydrogenase (Complex I) that is believed to belong to the minimal assembly required for catalysis. Complex I functions in the transfer of electrons from NADH to the respiratory chain. The immediate electron acceptor for the enzyme is believed to be ubiquinone. The sequence is that of NADH-ubiquinone oxidoreductase chain 3 (MT-ND3) from Polypterus ornatipinnis (Ornate bichir).